The chain runs to 747 residues: H(+)/Cl(-) exchange transporter 4 (747 aa).

The interval 1–50 (MDFLEEPFPDVGTYEDFHTIDWLREKSRDTDRHRKITSKSKESIWEFIKS) is required for localization in the endoplasmic reticulum. Residues 1–54 (MDFLEEPFPDVGTYEDFHTIDWLREKSRDTDRHRKITSKSKESIWEFIKSLLDA) lie on the Cytoplasmic side of the membrane. Transmembrane regions (helical) follow at residues 55 to 92 (WSGW…VCLS) and 138 to 161 (LNYL…VRVF). The short motif at 167 to 171 (GSGIP) is the Selectivity filter part_1 element. Ser168 serves as a coordination point for chloride. The segment at residues 170-177 (IPEIKTIL) is an intramembrane region (helical). A run of 2 helical transmembrane segments spans residues 187 to 205 (GKWT…VSSG) and 211 to 230 (EGPL…SLFS). A Selectivity filter part_2 motif is present at residues 209–213 (GKEGP). 2 intramembrane regions (helical) span residues 242-254 (VLSA…VSVA) and 258-266 (PIGGVLFSL). 5 helical membrane passes run 278 to 296 (LWRS…RSIN), 320 to 345 (FPFI…AWCR), 352 to 372 (LGRY…IVAY), 429 to 449 (MWQL…TFGM), and 454 to 473 (GLFI…VGIG). The Selectivity filter part_3 signature appears at 454 to 458 (GLFIP). Phe456 provides a ligand contact to chloride. 2 consecutive intramembrane regions (helical) follow at residues 501-515 (GLYA…LGGV) and 519-530 (TVSLVVIMFELT). Residues 531 to 534 (GGLE) constitute an intramembrane region (note=Loop between two helices). Residues 535–553 (YIVPLMAAAVTSKWVADAF) traverse the membrane as a helical segment. Over 554–747 (GKEGIYEAHI…NQDPESIMFN (194 aa)) the chain is Cytoplasmic. Tyr559 contributes to the chloride binding site. CBS domains follow at residues 587–653 (MRPR…QRQE) and 680–742 (LRRI…QDPE). Residues Ser597 and 618-620 (YNG) each bind ATP. Residues 654-683 (GIVSNSIMYFTEEPPELPANSPHPLKLRRI) are required for localization in the endoplasmic reticulum. 725–728 (TKKD) is a binding site for ATP.

Belongs to the chloride channel (TC 2.A.49) family. ClC-4/CLCN4 subfamily. In terms of tissue distribution, predominantly present in excitable tissues such as nervous system and skeletal muscle. Not detected in heart.

It is found in the early endosome membrane. Its subcellular location is the late endosome membrane. It localises to the endoplasmic reticulum membrane. The protein resides in the lysosome membrane. The protein localises to the recycling endosome membrane. Functionally, strongly outwardly rectifying, electrogenic H(+)/Cl(-)exchanger which mediates the exchange of chloride ions against protons. The CLC channel family contains both chloride channels and proton-coupled anion transporters that exchange chloride or another anion for protons. The presence of conserved gating glutamate residues is typical for family members that function as antiporters. This Mus musculus (Mouse) protein is H(+)/Cl(-) exchange transporter 4 (Clcn4).